The following is a 466-amino-acid chain: Asparagine--tRNA ligase (466 aa).

The protein belongs to the class-II aminoacyl-tRNA synthetase family. In terms of assembly, homodimer.

The protein resides in the cytoplasm. The enzyme catalyses tRNA(Asn) + L-asparagine + ATP = L-asparaginyl-tRNA(Asn) + AMP + diphosphate + H(+). This is Asparagine--tRNA ligase from Pectobacterium atrosepticum (strain SCRI 1043 / ATCC BAA-672) (Erwinia carotovora subsp. atroseptica).